We begin with the raw amino-acid sequence, 695 residues long: Follicle-stimulating hormone receptor (695 aa).

The signal sequence occupies residues 1-17 (MTFLLVSLLAFLSLGSG). 2 disulfides stabilise this stretch: cysteine 18–cysteine 25 and cysteine 23–cysteine 32. The LRRNT domain occupies 18-46 (CHHRICHCWHRVFLCQESKVTEIPSDLPR). The Extracellular portion of the chain corresponds to 18–366 (CHHRICHCWH…EDIMGYDILR (349 aa)). 9 LRR repeats span residues 49-72 (VELR…FGDL), 73-97 (EKIE…LSKL), 98-118 (HEIR…AFQN), 119-143 (LPNL…KIQS), 144-169 (LQKV…MGLS), 170-192 (FESM…AFNG), 193-216 (TQLD…VFQG), 217-240 (ASGP…GLEN), and 241-259 (IKKL…PSLD). The N-linked (GlcNAc...) asparagine glycan is linked to asparagine 93. N-linked (GlcNAc...) asparagine glycosylation is found at asparagine 191 and asparagine 199. Cystine bridges form between cysteine 275/cysteine 346, cysteine 276/cysteine 292, cysteine 276/cysteine 356, and cysteine 292/cysteine 338. N-linked (GlcNAc...) asparagine glycosylation is present at asparagine 293. At tyrosine 335 the chain carries Sulfotyrosine. A helical membrane pass occupies residues 367-387 (VLIWFISILAITGNIIVLMIL). At 388–398 (ITSQYKLTVPR) the chain is on the cytoplasmic side. A helical membrane pass occupies residues 399–419 (FLMCNLAFADLCIGIYLLLIA). At 420–444 (SVDIYTKSQYHNYAIDWQTGAGCDA) the chain is on the extracellular side. The chain crosses the membrane as a helical span at residues 445–465 (AGFFTVFASELSVYTLTVITL). Residues 466–487 (ERWHTITHAMQLECKVQLRHAA) lie on the Cytoplasmic side of the membrane. A helical transmembrane segment spans residues 488 to 508 (IIMLLGWIFAFMVALFPIFGI). The Extracellular segment spans residues 509–528 (SSYMKVSICLPMDIDSPLSQ). Residues 529–550 (LYVMSLLVLNVLAFVVICCCYA) traverse the membrane as a helical segment. Topologically, residues 551–573 (HIYLTVRNPNIVSSSSDTKIAKR) are cytoplasmic. A helical transmembrane segment spans residues 574-594 (MAMLIFTDFLCMAPISFFAIS). Topologically, residues 595 to 608 (ASLKVPLITVSKSK) are extracellular. Residues 609–629 (ILLVLFYPINSCANPFLYAIF) form a helical membrane-spanning segment. The Cytoplasmic portion of the chain corresponds to 630-695 (TKNFRRDFFI…LIPLRHLAKN (66 aa)).

The protein belongs to the G-protein coupled receptor 1 family. FSH/LSH/TSH subfamily. As to quaternary structure, homotrimer. Functions as a homotrimer binding the FSH hormone heterodimer composed of CGA and FSHB. Interacts with ARRB2. Interacts with APPL2; interaction is independent of follicle stimulating hormone stimulation. In terms of processing, N-glycosylated; indirectly required for FSH-binding, possibly via a conformational change that allows high affinity binding of hormone. Post-translationally, sulfated.

It localises to the cell membrane. In terms of biological role, g protein-coupled receptor for follitropin, the follicle-stimulating hormone. Through cAMP production activates the downstream PI3K-AKT and ERK1/ERK2 signaling pathways. The sequence is that of Follicle-stimulating hormone receptor (FSHR) from Felis catus (Cat).